We begin with the raw amino-acid sequence, 317 residues long: Lipoyl synthase (317 aa).

The tract at residues 1 to 21 is disordered; the sequence is MVTVIDTLARPRHPEKANRPE. Residues 12-21 are compositionally biased toward basic and acidic residues; it reads RHPEKANRPE. [4Fe-4S] cluster-binding residues include C57, C62, C68, C83, C87, C90, and S296. The region spanning 69–285 is the Radical SAM core domain; that stretch reads WEKKHATFMI…ETVAYAKGFL (217 aa).

It belongs to the radical SAM superfamily. Lipoyl synthase family. It depends on [4Fe-4S] cluster as a cofactor.

The protein localises to the cytoplasm. It carries out the reaction [[Fe-S] cluster scaffold protein carrying a second [4Fe-4S](2+) cluster] + N(6)-octanoyl-L-lysyl-[protein] + 2 oxidized [2Fe-2S]-[ferredoxin] + 2 S-adenosyl-L-methionine + 4 H(+) = [[Fe-S] cluster scaffold protein] + N(6)-[(R)-dihydrolipoyl]-L-lysyl-[protein] + 4 Fe(3+) + 2 hydrogen sulfide + 2 5'-deoxyadenosine + 2 L-methionine + 2 reduced [2Fe-2S]-[ferredoxin]. It functions in the pathway protein modification; protein lipoylation via endogenous pathway; protein N(6)-(lipoyl)lysine from octanoyl-[acyl-carrier-protein]: step 2/2. Functionally, catalyzes the radical-mediated insertion of two sulfur atoms into the C-6 and C-8 positions of the octanoyl moiety bound to the lipoyl domains of lipoate-dependent enzymes, thereby converting the octanoylated domains into lipoylated derivatives. The sequence is that of Lipoyl synthase from Xanthobacter autotrophicus (strain ATCC BAA-1158 / Py2).